Consider the following 90-residue polypeptide: Accessory gland-specific peptide 26Ab (90 aa).

A signal peptide spans M1–A21.

As to expression, main cells of the accessory glands of males.

It is found in the secreted. The protein resides in the extracellular space. Its function is as follows. This protein is transferred from male to female during mating and may affect egglaying and behavior after mating. This is Accessory gland-specific peptide 26Ab (Acp26Ab) from Drosophila sechellia (Fruit fly).